The chain runs to 112 residues: MTEYESAQKGALKLKGCGDMSLGKKKKKKNKANDQIMQEIITSKKNEEEKKKPSLDKRTPAQLAFEKMQEKRQMERILKKASKTHKQRVEDFNRHLDTLTEHYDIPKVSWTK.

The segment at 15–35 (KGCGDMSLGKKKKKKNKANDQ) is disordered.

This sequence belongs to the FAM32 family.

It localises to the nucleus. May induce G2 arrest and apoptosis. May also increase cell sensitivity to apoptotic stimuli. In Xenopus tropicalis (Western clawed frog), this protein is Protein FAM32A (fam32a).